The chain runs to 460 residues: EPD1-interacting receptor-like cytoplasmic serine/threonine-protein kinase 5D (460 aa).

The 282-residue stretch at 83–364 (FSSANFLGEG…DVVNILEPLL (282 aa)) folds into the Protein kinase domain. ATP-binding positions include 89 to 97 (LGEGGFGPV) and Lys-118. Phosphotyrosine occurs at positions 163 and 165. The active-site Proton acceptor is Asp-213.

This sequence belongs to the protein kinase superfamily. Ser/Thr protein kinase family. In terms of assembly, interacts with the V.dahliae elicitor EPD1 (AC G2WWH6). Phosphorylated at Tyr-163 and Tyr-165 in the presence of pathogen-associated molecular patterns (PAMPs); this triggers the expression of pathogenesis-related genes. As to expression, mostly expressed in roots and, to a lesser extent, in leaves.

The protein resides in the cell membrane. It catalyses the reaction L-seryl-[protein] + ATP = O-phospho-L-seryl-[protein] + ADP + H(+). The enzyme catalyses L-threonyl-[protein] + ATP = O-phospho-L-threonyl-[protein] + ADP + H(+). Functionally, required for pathogen-associated molecular pattern (PAMP, e.g. chitin and flg22)-triggered immunity (PTI) involving reactive oxygen species (ROS) accumulation and triggering plant defense, including defense-related gene expression (e.g. PR1 and LOX). Ensures specific recognition of the EPD1 effector of Verticillium dahliae, resulting in a hypersensitive response known as effector-triggered immunity (ETI), characterized by the activation of programmed cell death to limit infection by the pathogen. Priming plants with the incompatible pathogen V.dahliae leads to an increased resistance to compatible pathogens, as a result of systemic acquired resistance (SAR). The protein is EPD1-interacting receptor-like cytoplasmic serine/threonine-protein kinase 5D of Gossypium barbadense (Sea Island cotton).